Here is a 563-residue protein sequence, read N- to C-terminus: Pre-hexon-linking protein IIIa (563 aa).

The segment at 1–117 (MRKRRTLTAP…ALLHRVSKYN (117 aa)) is peripentonal hexon-tethering domain. Residues 148–261 (GSLTALNSFL…FTDSVSISRD (114 aa)) form a binding to hexon-linking protein region. Ser-235 carries the post-translational modification Phosphoserine; by host. Thr-284 is subject to Phosphothreonine; by host. The tract at residues 449 to 472 (RTESRSVSRVPTPASSRRSSVAMA) is disordered. 2 positions are modified to phosphoserine; by host: Ser-452 and Ser-456. Residues 462 to 472 (ASSRRSSVAMA) show a composition bias toward low complexity. Phosphoserine; by host occurs at positions 475 and 486. The interval 522–543 (KYSSAISSDESDDGMSKPDKFL) is disordered. A propeptide spanning residues 549–563 (GNPFAHLRPKLGRCL) is cleaved from the precursor.

Belongs to the adenoviridae hexon-linking protein IIIa family. In terms of assembly, interacts with hexon proteins; this interaction tethers the peripentonal hexons to hexons situated in the facet. Interacts with the penton protein (via N-terminus). Interacts with packaging protein 3; this interaction is required to promote correct genome packaging. Cleaved near the C-terminus by the viral protease during virion maturation to form the mature protein.

The protein localises to the virion. It localises to the host nucleus. Functionally, structural component of the virion that acts as a cement protein on the capsid exterior which mediates the interactions between the hexons, including the peripentonal hexons, and reaches all the way to the penton vertices. Two hexon linking proteins IIIa, one from each facet, stabilize the unique edge interface between a pair of facets. As the virus enters the host cell, hexon linking proteins IIIa are shed concomitant with virion acidification in the endosome. During virus assembly, seems to play a role in the serotype specificity of the packaging of viral DNA via its interaction with packaging protein 3. In Canis lupus familiaris (Dog), this protein is Pre-hexon-linking protein IIIa.